A 449-amino-acid polypeptide reads, in one-letter code: UDP-N-acetylmuramate--L-alanine ligase (449 aa).

121 to 127 (GAHGKSS) contributes to the ATP binding site.

Belongs to the MurCDEF family.

The protein resides in the cytoplasm. The catalysed reaction is UDP-N-acetyl-alpha-D-muramate + L-alanine + ATP = UDP-N-acetyl-alpha-D-muramoyl-L-alanine + ADP + phosphate + H(+). It functions in the pathway cell wall biogenesis; peptidoglycan biosynthesis. Its function is as follows. Cell wall formation. The polypeptide is UDP-N-acetylmuramate--L-alanine ligase (Helicobacter pylori (strain ATCC 700392 / 26695) (Campylobacter pylori)).